A 38-amino-acid polypeptide reads, in one-letter code: Toxin BmK NSPK (38 aa).

3 disulfides stabilise this stretch: cysteine 7/cysteine 27, cysteine 13/cysteine 32, and cysteine 17/cysteine 34.

Expressed by the venom gland.

It localises to the secreted. Its function is as follows. Blocks voltage-gated potassium (Kv) channel and augments neurite extension via NGF/TrkA signaling pathway. This chain is Toxin BmK NSPK, found in Olivierus martensii (Manchurian scorpion).